We begin with the raw amino-acid sequence, 270 residues long: Cerberus (270 aa).

The N-terminal stretch at 1 to 20 (MLLNVLRICIIVCLVNDGAG) is a signal peptide. Residues N103, N112, and N154 are each glycosylated (N-linked (GlcNAc...) asparagine). Cystine bridges form between C169-C215, C183-C229, C193-C245, and C197-C247. The 85-residue stretch at 169–253 (CKTLPFTQNI…ECTCEAHKSN (85 aa)) folds into the CTCK domain. Residue N228 is glycosylated (N-linked (GlcNAc...) asparagine).

The protein belongs to the DAN family. As to quaternary structure, the long chain interacts with nodal/nr-1, bmp4 and wnt8, thereby inhibiting their function. The short chain interacts with nodal/nr-1 but not bmp4 or wnt8. A component of the Nieuwkoop signaling center in the blastula. Expressed transiently in a broad anterior domain of the gastrula, including the anterior endoderm of the Spemann's organizer and more laterally the cardiac primordia. Expression is excluded from the prospective prechordal plate region and the ring of cells that give rise to the trunk-tail mesoderm.

It is found in the secreted. Its function is as follows. Inhibits wnt, nodal/nr-1 and bmp signaling in the embryo to promote head formation and anterior neural induction. Within the endoderm, acts as an essential mediator of nodal/nr-1-induced cardiogenesis in the overlying mesoderm. The chain is Cerberus from Xenopus laevis (African clawed frog).